Consider the following 380-residue polypeptide: Cytochrome b (380 aa).

Helical transmembrane passes span 34–54, 78–99, 114–134, and 179–199; these read FGSL…FLAM, WLLR…YFHI, WNIG…GYVL, and FFTF…IHLL. 2 residues coordinate heme b: His-84 and His-98. The heme b site is built by His-183 and His-197. Residue His-202 coordinates a ubiquinone. The next 4 helical transmembrane spans lie at 227-247, 289-309, 321-341, and 348-368; these read YKDL…STFA, LGGV…PIIH, IAKT…WIGG, and FITI…LLIP.

Belongs to the cytochrome b family. As to quaternary structure, the cytochrome bc1 complex contains 3 respiratory subunits (MT-CYB, CYC1 and UQCRFS1), 2 core proteins (UQCRC1 and UQCRC2) and probably 6 low-molecular weight proteins. It depends on heme b as a cofactor.

It localises to the mitochondrion inner membrane. In terms of biological role, component of the ubiquinol-cytochrome c reductase complex (complex III or cytochrome b-c1 complex) that is part of the mitochondrial respiratory chain. The b-c1 complex mediates electron transfer from ubiquinol to cytochrome c. Contributes to the generation of a proton gradient across the mitochondrial membrane that is then used for ATP synthesis. In Pelophylax nigromaculatus (Black-spotted frog), this protein is Cytochrome b (mt-cyb).